A 1007-amino-acid polypeptide reads, in one-letter code: Protocadherin alpha-C2 (1007 aa).

The N-terminal stretch at 1–42 is a signal peptide; that stretch reads MEQAGTRPAATEHPRLRRPMPWLLLLPLLLLLLLLLPGPAAS. Cadherin domains follow at residues 43 to 148, 149 to 257, 258 to 365, 374 to 469, and 470 to 579; these read QLRY…SPRF, PRPN…SPAF, DQST…APEV, VPEN…PPSF, and LEDS…APHI. Residues 43 to 708 are Extracellular-facing; sequence QLRYSVPEEQ…RTYSEITLYL (666 aa). N-linked (GlcNAc...) asparagine glycosylation is found at Asn280 and Asn436. Asn586 and Asn657 each carry an N-linked (GlcNAc...) asparagine glycan. The Cadherin 6 domain occupies 594-691; it reads VPRTAPAGYL…DRVSKILPDT (98 aa). A helical transmembrane segment spans residues 709 to 729; the sequence is IIALSTVSFIFLLTIIILSII. Over 730-1007 the chain is Cytoplasmic; it reads KCYRYTAYGT…GNSTTDNSDQ (278 aa). 4 PXXP repeats span residues 856-859, 889-892, 930-933, and 948-951; these read PRQP, PGGP, PGNP, and PGSP. The interval 856–951 is 4 X 4 AA repeats of P-X-X-P; the sequence is PRQPNPDWRY…PDKFIIPGSP (96 aa). Residues 885–1007 are disordered; sequence LRAGPGGPDQ…GNSTTDNSDQ (123 aa). Residues 966-980 show a composition bias toward basic and acidic residues; it reads DKSDFITFGKKEETK.

The protein localises to the cell membrane. Potential calcium-dependent cell-adhesion protein. May be involved in the establishment and maintenance of specific neuronal connections in the brain. This Homo sapiens (Human) protein is Protocadherin alpha-C2 (PCDHAC2).